Reading from the N-terminus, the 101-residue chain is Co-chaperonin GroES (101 aa).

The protein belongs to the GroES chaperonin family. Heptamer of 7 subunits arranged in a ring. Interacts with the chaperonin GroEL.

The protein localises to the cytoplasm. Together with the chaperonin GroEL, plays an essential role in assisting protein folding. The GroEL-GroES system forms a nano-cage that allows encapsulation of the non-native substrate proteins and provides a physical environment optimized to promote and accelerate protein folding. GroES binds to the apical surface of the GroEL ring, thereby capping the opening of the GroEL channel. This Thermus thermophilus (strain ATCC BAA-163 / DSM 7039 / HB27) protein is Co-chaperonin GroES.